The sequence spans 415 residues: JmjC domain-containing protein C (415 aa).

Residues 97 to 140 (NEKNNQSNNNNNNNNNNNNNNNNNNNNNNNNNNNNNNNNNNKPK) are disordered. Residues 104-137 (NNNNNNNNNNNNNNNNNNNNNNNNNNNNNNNNNN) are compositionally biased toward low complexity. Residues 127–302 (NNNNNNNNNN…ELLKSNKLWC (176 aa)) form the JmjC domain.

This is JmjC domain-containing protein C (jcdC) from Dictyostelium discoideum (Social amoeba).